We begin with the raw amino-acid sequence, 492 residues long: 2-succinylbenzoate--CoA ligase (492 aa).

It belongs to the ATP-dependent AMP-binding enzyme family. MenE subfamily.

The enzyme catalyses 2-succinylbenzoate + ATP + CoA = 2-succinylbenzoyl-CoA + AMP + diphosphate. Its pathway is quinol/quinone metabolism; 1,4-dihydroxy-2-naphthoate biosynthesis; 1,4-dihydroxy-2-naphthoate from chorismate: step 5/7. It participates in quinol/quinone metabolism; menaquinone biosynthesis. Converts 2-succinylbenzoate (OSB) to 2-succinylbenzoyl-CoA (OSB-CoA). The polypeptide is 2-succinylbenzoate--CoA ligase (Staphylococcus aureus (strain Mu3 / ATCC 700698)).